The primary structure comprises 630 residues: Probable potassium transport system protein Kup 2 (630 aa).

The next 12 membrane-spanning stretches (helical) occupy residues 14 to 34 (ATGF…DIGT), 56 to 76 (VIVL…VTAK), 108 to 128 (VPLL…SMIT), 145 to 165 (PALQ…LFAF), 176 to 196 (AFGP…LLHI), 214 to 234 (FMLS…LAVT), 255 to 275 (WLFF…AMVL), 293 to 313 (LLVP…QAVI), 352 to 372 (MLLL…SALA), 375 to 395 (YGIA…VVVW), 402 to 422 (PAAA…FFSA), and 427 to 447 (LMEG…LVWT).

It belongs to the HAK/KUP transporter (TC 2.A.72) family.

It localises to the cell inner membrane. The enzyme catalyses K(+)(in) + H(+)(in) = K(+)(out) + H(+)(out). Its function is as follows. Transport of potassium into the cell. Likely operates as a K(+):H(+) symporter. The protein is Probable potassium transport system protein Kup 2 of Rhodopseudomonas palustris (strain BisA53).